We begin with the raw amino-acid sequence, 625 residues long: Beta-galactosidase large subunit (625 aa).

The Proton donor role is filled by Glu465. Glu533 (nucleophile) is an active-site residue.

The protein belongs to the glycosyl hydrolase 2 family. Heterodimer of a large (LacL) and a small subunit (LacM).

It catalyses the reaction Hydrolysis of terminal non-reducing beta-D-galactose residues in beta-D-galactosides.. Its function is as follows. Component of a beta-galactosidase. The protein is Beta-galactosidase large subunit of Latilactobacillus sakei (Lactobacillus sakei).